A 198-amino-acid chain; its full sequence is Endonuclease V (198 aa).

The Mg(2+) site is built by Asp-38 and Asp-101.

Belongs to the endonuclease V family. It depends on Mg(2+) as a cofactor.

The protein localises to the cytoplasm. The catalysed reaction is Endonucleolytic cleavage at apurinic or apyrimidinic sites to products with a 5'-phosphate.. Its function is as follows. DNA repair enzyme involved in the repair of deaminated bases. Selectively cleaves double-stranded DNA at the second phosphodiester bond 3' to a deoxyinosine leaving behind the intact lesion on the nicked DNA. In Saccharolobus islandicus (strain M.16.27) (Sulfolobus islandicus), this protein is Endonuclease V.